Reading from the N-terminus, the 298-residue chain is Porphobilinogen deaminase (298 aa).

Cys239 is subject to S-(dipyrrolylmethanemethyl)cysteine.

It belongs to the HMBS family. Monomer. The cofactor is dipyrromethane.

It carries out the reaction 4 porphobilinogen + H2O = hydroxymethylbilane + 4 NH4(+). It functions in the pathway porphyrin-containing compound metabolism; protoporphyrin-IX biosynthesis; coproporphyrinogen-III from 5-aminolevulinate: step 2/4. Functionally, tetrapolymerization of the monopyrrole PBG into the hydroxymethylbilane pre-uroporphyrinogen in several discrete steps. In Ehrlichia canis (strain Jake), this protein is Porphobilinogen deaminase.